Reading from the N-terminus, the 264-residue chain is Thymidylate synthase (264 aa).

Arginine 21 is a dUMP binding site. (6R)-5,10-methylene-5,6,7,8-tetrahydrofolate is bound at residue histidine 51. DUMP is bound at residue 126-127 (RR). Residue cysteine 146 is the Nucleophile of the active site. Residues 166-169 (RSCD), asparagine 177, and 207-209 (HLY) each bind dUMP. Aspartate 169 lines the (6R)-5,10-methylene-5,6,7,8-tetrahydrofolate pocket. Alanine 263 lines the (6R)-5,10-methylene-5,6,7,8-tetrahydrofolate pocket.

It belongs to the thymidylate synthase family. Bacterial-type ThyA subfamily. Homodimer.

The protein resides in the cytoplasm. The enzyme catalyses dUMP + (6R)-5,10-methylene-5,6,7,8-tetrahydrofolate = 7,8-dihydrofolate + dTMP. It functions in the pathway pyrimidine metabolism; dTTP biosynthesis. Catalyzes the reductive methylation of 2'-deoxyuridine-5'-monophosphate (dUMP) to 2'-deoxythymidine-5'-monophosphate (dTMP) while utilizing 5,10-methylenetetrahydrofolate (mTHF) as the methyl donor and reductant in the reaction, yielding dihydrofolate (DHF) as a by-product. This enzymatic reaction provides an intracellular de novo source of dTMP, an essential precursor for DNA biosynthesis. The polypeptide is Thymidylate synthase (Xenorhabdus nematophila (strain ATCC 19061 / DSM 3370 / CCUG 14189 / LMG 1036 / NCIMB 9965 / AN6)).